The chain runs to 188 residues: Protein GrpE (188 aa).

Residues 1–16 (MEERNEQVVEEVKEAQ) are compositionally biased toward basic and acidic residues. Residues 1–31 (MEERNEQVVEEVKEAQVEEAVTPENSEETVE) form a disordered region.

It belongs to the GrpE family. In terms of assembly, homodimer.

It is found in the cytoplasm. Its function is as follows. Participates actively in the response to hyperosmotic and heat shock by preventing the aggregation of stress-denatured proteins, in association with DnaK and GrpE. It is the nucleotide exchange factor for DnaK and may function as a thermosensor. Unfolded proteins bind initially to DnaJ; upon interaction with the DnaJ-bound protein, DnaK hydrolyzes its bound ATP, resulting in the formation of a stable complex. GrpE releases ADP from DnaK; ATP binding to DnaK triggers the release of the substrate protein, thus completing the reaction cycle. Several rounds of ATP-dependent interactions between DnaJ, DnaK and GrpE are required for fully efficient folding. This is Protein GrpE from Bacillus anthracis.